A 205-amino-acid chain; its full sequence is SREBP regulating gene protein (205 aa).

Topologically, residues 1–16 are cytoplasmic; that stretch reads MLNLAALLWRRLLRKR. The chain crosses the membrane as a helical span at residues 17–35; that stretch reads WVLALVFGLSLVYFLSSTF. The Lumenal segment spans residues 36 to 205; sequence KQEERAVRDR…GESPPELFPA (170 aa). Asn-67 carries an N-linked (GlcNAc...) asparagine glycan.

The protein belongs to the SPRING family. Interacts with SCAP. Ubiquitously expressed with a slightly higher expression in the liver and kidney.

The protein resides in the golgi apparatus membrane. Positively regulates hepatic SREBP signaling pathway by modulating the proper localization of SCAP (SREBP cleavage-activating protein) to the endoplasmic reticulum, thereby controlling the level of functional SCAP. Plays a crucial role during embryogenesis. In Mus musculus (Mouse), this protein is SREBP regulating gene protein (Spring1).